A 429-amino-acid chain; its full sequence is Adenylosuccinate synthetase (429 aa).

GTP is bound by residues 12–18 and 40–42; these read GDEGKGK and GHT. Residue D13 is the Proton acceptor of the active site. The Mg(2+) site is built by D13 and G40. Residues 13–16, 38–41, T128, R142, Q223, T238, and R302 contribute to the IMP site; these read DEGK and NAGH. H41 functions as the Proton donor in the catalytic mechanism. 298-304 contacts substrate; the sequence is ATTGRKR. GTP contacts are provided by residues R304, 330 to 332, and 412 to 414; these read KLD and GTG.

The protein belongs to the adenylosuccinate synthetase family. Homodimer. Requires Mg(2+) as cofactor.

The protein localises to the cytoplasm. It carries out the reaction IMP + L-aspartate + GTP = N(6)-(1,2-dicarboxyethyl)-AMP + GDP + phosphate + 2 H(+). The protein operates within purine metabolism; AMP biosynthesis via de novo pathway; AMP from IMP: step 1/2. Functionally, plays an important role in the de novo pathway of purine nucleotide biosynthesis. Catalyzes the first committed step in the biosynthesis of AMP from IMP. The polypeptide is Adenylosuccinate synthetase (Tropheryma whipplei (strain TW08/27) (Whipple's bacillus)).